We begin with the raw amino-acid sequence, 419 residues long: uncharacterized protein (419 aa).

This is an uncharacterized protein from Acinetobacter baylyi (strain ATCC 33305 / BD413 / ADP1).